The sequence spans 366 residues: Ribosomal RNA large subunit methyltransferase M (366 aa).

S-adenosyl-L-methionine-binding positions include Ser188, 221-224, Asp240, Asp260, and Asp277; that span reads CPGG. The Proton acceptor role is filled by Lys306.

This sequence belongs to the class I-like SAM-binding methyltransferase superfamily. RNA methyltransferase RlmE family. RlmM subfamily. As to quaternary structure, monomer.

The protein resides in the cytoplasm. The enzyme catalyses cytidine(2498) in 23S rRNA + S-adenosyl-L-methionine = 2'-O-methylcytidine(2498) in 23S rRNA + S-adenosyl-L-homocysteine + H(+). Catalyzes the 2'-O-methylation at nucleotide C2498 in 23S rRNA. This chain is Ribosomal RNA large subunit methyltransferase M, found in Sodalis glossinidius (strain morsitans).